A 204-amino-acid polypeptide reads, in one-letter code: FMN-dependent NADH:quinone oxidoreductase (204 aa).

FMN contacts are provided by residues serine 9 and 15–17 (SAS).

Belongs to the azoreductase type 1 family. As to quaternary structure, homodimer. The cofactor is FMN.

It carries out the reaction 2 a quinone + NADH + H(+) = 2 a 1,4-benzosemiquinone + NAD(+). The catalysed reaction is N,N-dimethyl-1,4-phenylenediamine + anthranilate + 2 NAD(+) = 2-(4-dimethylaminophenyl)diazenylbenzoate + 2 NADH + 2 H(+). In terms of biological role, quinone reductase that provides resistance to thiol-specific stress caused by electrophilic quinones. Its function is as follows. Also exhibits azoreductase activity. Catalyzes the reductive cleavage of the azo bond in aromatic azo compounds to the corresponding amines. The chain is FMN-dependent NADH:quinone oxidoreductase from Xanthomonas campestris pv. campestris (strain ATCC 33913 / DSM 3586 / NCPPB 528 / LMG 568 / P 25).